Here is a 61-residue protein sequence, read N- to C-terminus: Metallothionein-2A (61 aa).

An N-acetylmethionine modification is found at methionine 1. The tract at residues 1 to 29 (MDPNCSCAAGGSCTCAGSCKCKDCKCTSC) is beta. Cysteine 5, cysteine 7, cysteine 13, cysteine 15, cysteine 19, cysteine 21, cysteine 24, cysteine 26, cysteine 29, cysteine 33, cysteine 34, cysteine 36, cysteine 37, cysteine 41, cysteine 44, cysteine 48, cysteine 50, and cysteine 57 together coordinate a divalent metal cation. Residues 30–61 (KKSCCSCCPVGCAKCAQGCICKGASDKCSCCA) form an alpha region. Serine 58 carries the phosphoserine modification. The a divalent metal cation site is built by cysteine 59 and cysteine 60.

This sequence belongs to the metallothionein superfamily. Type 1 family. In terms of assembly, interacts with EOLA1.

Functionally, metallothioneins have a high content of cysteine residues that bind various heavy metals; these proteins are transcriptionally regulated by both heavy metals and glucocorticoids. In Sus scrofa (Pig), this protein is Metallothionein-2A (MT2A).